Here is a 386-residue protein sequence, read N- to C-terminus: GTPase Obg (386 aa).

The Obg domain occupies 4–162; the sequence is SNFVDYVKIY…MTVILELKLL (159 aa). A disordered region spans residues 18–45; that stretch reads KGGRGSTHMRREKYTPNGGPDGGDGGRG. Positions 36–45 are enriched in gly residues; the sequence is GPDGGDGGRG. In terms of domain architecture, OBG-type G spans 163–329; the sequence is ADVGLVGFPN…LKDILWTELN (167 aa). GTP contacts are provided by residues 169–176, 194–198, 216–219, 283–286, and 310–312; these read GFPNAGKS, FTTLE, DIPG, TKSD, and SSV. Mg(2+)-binding residues include Ser176 and Thr196. The disordered stretch occupies residues 351 to 386; it reads ELKDMGEDEELDYEYEDDGDEDDLDYEYEEEDWEDK. Positions 356 to 386 are enriched in acidic residues; that stretch reads GEDEELDYEYEDDGDEDDLDYEYEEEDWEDK.

This sequence belongs to the TRAFAC class OBG-HflX-like GTPase superfamily. OBG GTPase family. As to quaternary structure, monomer. It depends on Mg(2+) as a cofactor.

It is found in the cytoplasm. Functionally, an essential GTPase which binds GTP, GDP and possibly (p)ppGpp with moderate affinity, with high nucleotide exchange rates and a fairly low GTP hydrolysis rate. Plays a role in control of the cell cycle, stress response, ribosome biogenesis and in those bacteria that undergo differentiation, in morphogenesis control. The chain is GTPase Obg from Bacteroides fragilis (strain YCH46).